The sequence spans 248 residues: Small ribosomal subunit protein uS2 (248 aa).

It belongs to the universal ribosomal protein uS2 family.

The protein is Small ribosomal subunit protein uS2 of Thiobacillus denitrificans (strain ATCC 25259 / T1).